The primary structure comprises 610 residues: Lipoprotein LpqB (610 aa).

The first 27 residues, 1-27, serve as a signal peptide directing secretion; that stretch reads MGAEGGGRRRALRLGAYVGCGAVLLTG. A lipid anchor (N-palmitoyl cysteine) is attached at cysteine 28. The S-diacylglycerol cysteine moiety is linked to residue cysteine 28.

Belongs to the LpqB lipoprotein family.

Its subcellular location is the cell membrane. In Streptomyces avermitilis (strain ATCC 31267 / DSM 46492 / JCM 5070 / NBRC 14893 / NCIMB 12804 / NRRL 8165 / MA-4680), this protein is Lipoprotein LpqB.